Reading from the N-terminus, the 361-residue chain is Methylthioribose-1-phosphate isomerase (361 aa).

Asp245 serves as the catalytic Proton donor.

Belongs to the eIF-2B alpha/beta/delta subunits family. MtnA subfamily.

The protein localises to the cytoplasm. It is found in the nucleus. The catalysed reaction is 5-(methylsulfanyl)-alpha-D-ribose 1-phosphate = 5-(methylsulfanyl)-D-ribulose 1-phosphate. The protein operates within amino-acid biosynthesis; L-methionine biosynthesis via salvage pathway; L-methionine from S-methyl-5-thio-alpha-D-ribose 1-phosphate: step 1/6. In terms of biological role, catalyzes the interconversion of methylthioribose-1-phosphate (MTR-1-P) into methylthioribulose-1-phosphate (MTRu-1-P). This Monosiga brevicollis (Choanoflagellate) protein is Methylthioribose-1-phosphate isomerase.